Reading from the N-terminus, the 185-residue chain is Elongation factor P (185 aa).

It belongs to the elongation factor P family.

Its subcellular location is the cytoplasm. The protein operates within protein biosynthesis; polypeptide chain elongation. In terms of biological role, involved in peptide bond synthesis. Stimulates efficient translation and peptide-bond synthesis on native or reconstituted 70S ribosomes in vitro. Probably functions indirectly by altering the affinity of the ribosome for aminoacyl-tRNA, thus increasing their reactivity as acceptors for peptidyl transferase. The chain is Elongation factor P from Gloeothece citriformis (strain PCC 7424) (Cyanothece sp. (strain PCC 7424)).